Here is an 879-residue protein sequence, read N- to C-terminus: Alanine--tRNA ligase 1 (879 aa).

Zn(2+)-binding residues include His-566, His-570, Cys-668, and His-672.

Belongs to the class-II aminoacyl-tRNA synthetase family. Requires Zn(2+) as cofactor.

The protein localises to the cytoplasm. The enzyme catalyses tRNA(Ala) + L-alanine + ATP = L-alanyl-tRNA(Ala) + AMP + diphosphate. Functionally, catalyzes the attachment of alanine to tRNA(Ala) in a two-step reaction: alanine is first activated by ATP to form Ala-AMP and then transferred to the acceptor end of tRNA(Ala). Also edits incorrectly charged Ser-tRNA(Ala) and Gly-tRNA(Ala) via its editing domain. This chain is Alanine--tRNA ligase 1, found in Lachnoclostridium phytofermentans (strain ATCC 700394 / DSM 18823 / ISDg) (Clostridium phytofermentans).